A 102-amino-acid polypeptide reads, in one-letter code: snRNA-activating protein complex subunit 5 (102 aa).

The segment covering 73-82 has biased composition (polar residues); that stretch reads QTTLKLSTRS. The tract at residues 73-102 is disordered; it reads QTTLKLSTRSPMEEEEEEEEEEEEEEESDS. Over residues 85–102 the composition is skewed to acidic residues; the sequence is EEEEEEEEEEEEEEESDS.

In terms of assembly, part of the SNAPc complex composed of 5 subunits: SNAPC1, SNAPC2, SNAPC3, SNAPC4 and SNAPC5. SNAPC5 interacts with SNAPC4.

It localises to the nucleus. In terms of biological role, part of the SNAPc complex required for the transcription of both RNA polymerase II and III small-nuclear RNA genes. Binds to the proximal sequence element (PSE), a non-TATA-box basal promoter element common to these 2 types of genes. Recruits TBP and BRF2 to the U6 snRNA TATA box. The protein is snRNA-activating protein complex subunit 5 of Mus musculus (Mouse).